The chain runs to 1025 residues: Leucyl-cystinyl aminopeptidase (1025 aa).

Position 1 is an N-acetylmethionine (Met1). The Cytoplasmic portion of the chain corresponds to 1-109 (METFTNDRLQ…DGTCSVPSAR (109 aa)). The Dileucine internalization motif signature appears at 53–54 (LL). Tyr70 carries the phosphotyrosine modification. The short motif at 76-77 (LL) is the Dileucine internalization motif element. 2 positions are modified to phosphoserine; by PKC/PRKCZ; in vitro: Ser80 and Ser91. The interval 96–101 (RQSPDG) is tankyrase binding. Residues 110-131 (TLVICVFVIVVAVSVIMVIYLL) form a helical; Signal-anchor for type II membrane protein membrane-spanning segment. The Extracellular segment spans residues 132 to 1025 (PRCTFTKEGC…RNLKTLTLWL (894 aa)). Asn145, Asn184, Asn215, Asn256, and Asn266 each carry an N-linked (GlcNAc...) asparagine glycan. A substrate-binding site is contributed by Glu295. N-linked (GlcNAc...) asparagine glycosylation is found at Asn368 and Asn374. 428–432 (GAMEN) is a binding site for substrate. N-linked (GlcNAc...) asparagine glycosylation occurs at Asn447. Residue His464 coordinates Zn(2+). The active-site Proton acceptor is Glu465. Positions 468 and 487 each coordinate Zn(2+). Asn525, Asn578, Asn664, Asn682, Asn695, Asn758, Asn834, Asn850, and Asn989 each carry an N-linked (GlcNAc...) asparagine glycan.

This sequence belongs to the peptidase M1 family. As to quaternary structure, homodimer. Binds tankyrases 1 and 2. The cofactor is Zn(2+). Post-translationally, N-glycosylated. As to expression, highly expressed in heart, brain, spleen, lung, kidney and white adipose tissue. Detected at lower levels in skeletal muscle and liver.

The protein localises to the cell membrane. It is found in the endomembrane system. The enzyme catalyses Release of an N-terminal amino acid, Cys-|-Xaa-, in which the half-cystine residue is involved in a disulfide loop, notably in oxytocin or vasopressin. Hydrolysis rates on a range of aminoacyl arylamides exceed that for the cystinyl derivative, however.. Its function is as follows. Release of an N-terminal amino acid, cleave before cysteine, leucine as well as other amino acids. Degrades peptide hormones such as oxytocin, vasopressin and angiotensin III, and plays a role in maintaining homeostasis during pregnancy. May be involved in the inactivation of neuronal peptides in the brain. Cleaves Met-enkephalin and dynorphin. Binds angiotensin IV and may be the angiotensin IV receptor in the brain. The chain is Leucyl-cystinyl aminopeptidase (Lnpep) from Rattus norvegicus (Rat).